We begin with the raw amino-acid sequence, 708 residues long: Kelch-like protein 11 (708 aa).

The signal sequence occupies residues 1–15 (MAAAAVAAAAAAAAA). Positions 47–70 (DFGPGPGISAMEASGGDPGPEAED) are disordered. The BTB domain occupies 94 to 170 (CDITLCFGGA…MYTGRIRVST (77 aa)). The region spanning 205 to 307 (CVAIHSLAHM…KPTYLTRHVK (103 aa)) is the BACK domain. Kelch repeat units follow at residues 360–407 (VIMV…VTES), 408–453 (YVYV…EVKG), 455–501 (LYSI…AIED), 503–556 (FVYI…VVNS), and 610–661 (DVFI…HVRI). The residue at position 465 (Ser465) is a Phosphoserine.

As to quaternary structure, component of a cullin-RING-based BCR (BTB-CUL3-RBX1) E3 ubiquitin-protein ligase complex. Homodimer. Interacts with CUL3.

Its function is as follows. Component of a cullin-RING-based BCR (BTB-CUL3-RBX1) E3 ubiquitin-protein ligase complex that mediates the ubiquitination of target proteins, leading most often to their proteasomal degradation. This chain is Kelch-like protein 11 (KLHL11), found in Homo sapiens (Human).